Here is a 166-residue protein sequence, read N- to C-terminus: NADH-quinone oxidoreductase subunit A (166 aa).

Helical transmembrane passes span 16-36 (FAVF…GAYF), 68-88 (FYLV…LYAW), and 98-118 (IGFI…FYLV). A disordered region spans residues 141–166 (RYASSHPQDISQELSVAGSQQANESR).

It belongs to the complex I subunit 3 family. NDH-1 is composed of 13 different subunits. Subunits NuoA, H, J, K, L, M, N constitute the membrane sector of the complex.

It is found in the cell inner membrane. It carries out the reaction a quinone + NADH + 5 H(+)(in) = a quinol + NAD(+) + 4 H(+)(out). In terms of biological role, NDH-1 shuttles electrons from NADH, via FMN and iron-sulfur (Fe-S) centers, to quinones in the respiratory chain. The immediate electron acceptor for the enzyme in this species is believed to be ubiquinone. Couples the redox reaction to proton translocation (for every two electrons transferred, four hydrogen ions are translocated across the cytoplasmic membrane), and thus conserves the redox energy in a proton gradient. This chain is NADH-quinone oxidoreductase subunit A, found in Yersinia pseudotuberculosis serotype IB (strain PB1/+).